A 172-amino-acid polypeptide reads, in one-letter code: MKYFNVGKIVNTQGLRGEVRVLSVTDFADERFKKGSQLALFDKKDHFAMTVEIASHRKHKNFDIVKFKGLYHINDVEKYRDFTLKVTEDHLADLEDGEFYYHEIIGLDVYENDILIGQVKEILQPGANDVWVVKRKGKKDLLLPYIPSVILKVDVPNGRIDVTVLEGLDDEN.

The 73-residue stretch at 96-168 (DGEFYYHEII…RIDVTVLEGL (73 aa)) folds into the PRC barrel domain.

This sequence belongs to the RimM family. In terms of assembly, binds ribosomal protein uS19.

Its subcellular location is the cytoplasm. Functionally, an accessory protein needed during the final step in the assembly of 30S ribosomal subunit, possibly for assembly of the head region. Essential for efficient processing of 16S rRNA. May be needed both before and after RbfA during the maturation of 16S rRNA. It has affinity for free ribosomal 30S subunits but not for 70S ribosomes. The sequence is that of Ribosome maturation factor RimM from Streptococcus mutans serotype c (strain ATCC 700610 / UA159).